The following is a 379-amino-acid chain: L-lactate dehydrogenase (379 aa).

In terms of domain architecture, FMN hydroxy acid dehydrogenase spans 1–379 (MIISASTDYR…ITSDLLVKER (379 aa)). Residue Tyr-24 participates in substrate binding. Residues Ser-106 and Gln-127 each contribute to the FMN site. Substrate is bound at residue Tyr-129. Position 155 (Thr-155) interacts with FMN. Residue Arg-164 participates in substrate binding. Position 251 (Lys-251) interacts with FMN. His-275 (proton acceptor) is an active-site residue. Arg-278 is a binding site for substrate. 306–330 (DSGIRTGLDVVRMLALGADTVLLGR) lines the FMN pocket.

It belongs to the FMN-dependent alpha-hydroxy acid dehydrogenase family. As to quaternary structure, homotetramer. Requires FMN as cofactor.

The protein localises to the cell inner membrane. It catalyses the reaction (S)-lactate + A = pyruvate + AH2. Functionally, catalyzes the conversion of L-lactate to pyruvate. Is coupled to the respiratory chain. This is L-lactate dehydrogenase from Ectopseudomonas mendocina (strain ymp) (Pseudomonas mendocina).